Here is a 207-residue protein sequence, read N- to C-terminus: 3-isopropylmalate dehydratase small subunit (207 aa).

It belongs to the LeuD family. LeuD type 1 subfamily. In terms of assembly, heterodimer of LeuC and LeuD.

It catalyses the reaction (2R,3S)-3-isopropylmalate = (2S)-2-isopropylmalate. It functions in the pathway amino-acid biosynthesis; L-leucine biosynthesis; L-leucine from 3-methyl-2-oxobutanoate: step 2/4. Catalyzes the isomerization between 2-isopropylmalate and 3-isopropylmalate, via the formation of 2-isopropylmaleate. The polypeptide is 3-isopropylmalate dehydratase small subunit (leuD) (Buchnera aphidicola subsp. Pterocomma populeum).